A 38-amino-acid chain; its full sequence is Exendin-1 (38 aa).

S32 carries O-linked (HexNAc...) serine; in Exendin-1 and Exendin-1b glycosylation.

This sequence belongs to the glucagon family. O-linked glycan consists of Hex-HexNAc saccharide. Post-translationally, glycosylation may be of interest for the biological stability of exendin-1 and exendin-1b. Expressed by the venom gland.

Its subcellular location is the secreted. O-linked and free exendin-1 and exendin-1b have vasoactive intestinal peptide(VIP)/secretin-like biological activities. They interact with rat and human VIP receptors 1 (VIPR1) and 2 (VIPR2), with the highest affinity for the human VIPR2. They induce hypotension that is mediated by relaxation of cardiac smooth muscle. This Heloderma horridum horridum (Mexican beaded lizard) protein is Exendin-1.